A 221-amino-acid chain; its full sequence is Small ribosomal subunit protein uS3 (221 aa).

Residues 39–107 (LRKFLKDKLK…EVFLSIQEVR (69 aa)) form the KH type-2 domain.

Belongs to the universal ribosomal protein uS3 family. Part of the 30S ribosomal subunit. Forms a tight complex with proteins S10 and S14.

In terms of biological role, binds the lower part of the 30S subunit head. Binds mRNA in the 70S ribosome, positioning it for translation. This is Small ribosomal subunit protein uS3 from Bdellovibrio bacteriovorus (strain ATCC 15356 / DSM 50701 / NCIMB 9529 / HD100).